Consider the following 195-residue polypeptide: Segregation and condensation protein B (195 aa).

The disordered stretch occupies residues 169–195; sequence LEDVAASQENSREAGGRGSIPGHPGEE.

It belongs to the ScpB family. Homodimer. Homodimerization may be required to stabilize the binding of ScpA to the Smc head domains. Component of a cohesin-like complex composed of ScpA, ScpB and the Smc homodimer, in which ScpA and ScpB bind to the head domain of Smc. The presence of the three proteins is required for the association of the complex with DNA.

The protein localises to the cytoplasm. In terms of biological role, participates in chromosomal partition during cell division. May act via the formation of a condensin-like complex containing Smc and ScpA that pull DNA away from mid-cell into both cell halves. The chain is Segregation and condensation protein B from Moorella thermoacetica (strain ATCC 39073 / JCM 9320).